Consider the following 109-residue polypeptide: Large ribosomal subunit protein uL24 (109 aa).

The protein belongs to the universal ribosomal protein uL24 family. As to quaternary structure, part of the 50S ribosomal subunit.

Functionally, one of two assembly initiator proteins, it binds directly to the 5'-end of the 23S rRNA, where it nucleates assembly of the 50S subunit. In terms of biological role, one of the proteins that surrounds the polypeptide exit tunnel on the outside of the subunit. This chain is Large ribosomal subunit protein uL24, found in Legionella pneumophila (strain Paris).